The chain runs to 664 residues: Macoilin (664 aa).

4 helical membrane-spanning segments follow: residues 28–48 (TFLYLKFLVVWALVLLADFVL), 75–95 (AFSVFFVCVAFTSNIICLLFI), 120–140 (VCLPTVSLWILFVYIEAAIRF), and 154–174 (FAAHCIGYPVVTLGFGFKSYV). Over residues 252–265 (YREKGKEKDKDAKK) the composition is skewed to basic and acidic residues. The disordered stretch occupies residues 252-274 (YREKGKEKDKDAKKHNLGINNNN). S305 carries the post-translational modification Phosphoserine. Positions 320–348 (KNYKNASGVVNSSPRSHSATNGSIPSSSS) are enriched in polar residues. The disordered stretch occupies residues 320–375 (KNYKNASGVVNSSPRSHSATNGSIPSSSSKNEKKQRCTSKGPSAHKDLMENCIPNN). N-linked (GlcNAc...) asparagine glycosylation occurs at N324. The residue at position 332 (S332) is a Phosphoserine. N340 and N452 each carry an N-linked (GlcNAc...) asparagine glycan. Residues 630–664 (TSPLSPVSPHYSSKFVETSPSGLDPNASVYQPLKK) are disordered. 2 positions are modified to phosphoserine: S631 and S634. N655 carries N-linked (GlcNAc...) asparagine glycosylation.

This sequence belongs to the macoilin family.

The protein localises to the rough endoplasmic reticulum membrane. The protein resides in the nucleus membrane. Its function is as follows. Plays a role in the regulation of neuronal activity. The chain is Macoilin from Rattus norvegicus (Rat).